The sequence spans 143 residues: MSDNNGTPEPQVETTSVFRADLLKEMESSTGTAPASTGAENLPAGSALLVVKRGPNAGARFLLDQPTTTAGRHPESDIFLDDVTVSRRHAEFRINEGEFEVVDVGSLNGTYVNREPRNAQVMQTGDEIQIGKFRLVFLAGPAE.

Position 14 is a phosphothreonine (threonine 14). The 50-residue stretch at 68–117 (TTAGRHPESDIFLDDVTVSRRHAEFRINEGEFEVVDVGSLNGTYVNREPR) folds into the FHA domain.

The protein resides in the cytoplasm. Its function is as follows. An essential component of the PknG signaling pathway. When unphosphorylated, it inhibits the activity of 2-oxoglutarate dehydrogenase. When phosphorylated it does not inhibit 2-oxoglutarate dehydrogenase. This is Oxoglutarate dehydrogenase inhibitor (odhI) from Corynebacterium glutamicum (strain ATCC 13032 / DSM 20300 / JCM 1318 / BCRC 11384 / CCUG 27702 / LMG 3730 / NBRC 12168 / NCIMB 10025 / NRRL B-2784 / 534).